The following is a 401-amino-acid chain: tRNA-specific 2-thiouridylase MnmA (401 aa).

Residues 13–20 and M39 each bind ATP; that span reads GLSGGVDS. Residues 99-101 are interaction with target base in tRNA; that stretch reads NPD. C104 functions as the Nucleophile in the catalytic mechanism. A disulfide bridge connects residues C104 and C202. Position 128 (G128) interacts with ATP. The interval 152–154 is interaction with tRNA; it reads KDQ. The Cysteine persulfide intermediate role is filled by C202. The tract at residues 329-330 is interaction with tRNA; sequence RY.

The protein belongs to the MnmA/TRMU family.

The protein localises to the cytoplasm. The enzyme catalyses S-sulfanyl-L-cysteinyl-[protein] + uridine(34) in tRNA + AH2 + ATP = 2-thiouridine(34) in tRNA + L-cysteinyl-[protein] + A + AMP + diphosphate + H(+). Catalyzes the 2-thiolation of uridine at the wobble position (U34) of tRNA, leading to the formation of s(2)U34. This is tRNA-specific 2-thiouridylase MnmA from Polaromonas sp. (strain JS666 / ATCC BAA-500).